Reading from the N-terminus, the 235-residue chain is Lipoprotein-releasing system ATP-binding protein LolD (235 aa).

The region spanning 13 to 235 (LCCSNIIKRY…SNGMLKISTI (223 aa)) is the ABC transporter domain. Residue 49–56 (GASGSGKS) coordinates ATP.

This sequence belongs to the ABC transporter superfamily. Lipoprotein translocase (TC 3.A.1.125) family. In terms of assembly, the complex is composed of two ATP-binding proteins (LolD) and two transmembrane proteins (LolC and LolE).

The protein resides in the cell inner membrane. Part of the ABC transporter complex LolCDE involved in the translocation of mature outer membrane-directed lipoproteins, from the inner membrane to the periplasmic chaperone, LolA. Responsible for the formation of the LolA-lipoprotein complex in an ATP-dependent manner. The sequence is that of Lipoprotein-releasing system ATP-binding protein LolD from Blochmanniella floridana.